The sequence spans 542 residues: CTP synthase (542 aa).

An amidoligase domain region spans residues 1–265; sequence MTRYVFITGG…DREILAHFQM (265 aa). Serine 13 lines the CTP pocket. A UTP-binding site is contributed by serine 13. Residues 14-19 and aspartate 71 each bind ATP; that span reads SLGKGL. Aspartate 71 and glutamate 139 together coordinate Mg(2+). Residues 146-148, 186-191, and lysine 222 each bind CTP; these read DIE and KTKPTQ. UTP-binding positions include 186–191 and lysine 222; that span reads KTKPTQ. 238–240 is an ATP binding site; sequence RDV. The Glutamine amidotransferase type-1 domain maps to 291 to 541; the sequence is TIAIVGKYTG…IAAAIDQSRL (251 aa). Position 353 (glycine 353) interacts with L-glutamine. Cysteine 380 (nucleophile; for glutamine hydrolysis) is an active-site residue. Residues 381–384, glutamate 404, and arginine 469 contribute to the L-glutamine site; that span reads FGMQ. Active-site residues include histidine 514 and glutamate 516.

Belongs to the CTP synthase family. In terms of assembly, homotetramer.

It carries out the reaction UTP + L-glutamine + ATP + H2O = CTP + L-glutamate + ADP + phosphate + 2 H(+). The catalysed reaction is L-glutamine + H2O = L-glutamate + NH4(+). The enzyme catalyses UTP + NH4(+) + ATP = CTP + ADP + phosphate + 2 H(+). It functions in the pathway pyrimidine metabolism; CTP biosynthesis via de novo pathway; CTP from UDP: step 2/2. Allosterically activated by GTP, when glutamine is the substrate; GTP has no effect on the reaction when ammonia is the substrate. The allosteric effector GTP functions by stabilizing the protein conformation that binds the tetrahedral intermediate(s) formed during glutamine hydrolysis. Inhibited by the product CTP, via allosteric rather than competitive inhibition. Catalyzes the ATP-dependent amination of UTP to CTP with either L-glutamine or ammonia as the source of nitrogen. Regulates intracellular CTP levels through interactions with the four ribonucleotide triphosphates. The polypeptide is CTP synthase (Methylorubrum extorquens (strain CM4 / NCIMB 13688) (Methylobacterium extorquens)).